The sequence spans 223 residues: Homeobox protein egl-5 (223 aa).

The span at 1–25 shows a compositional bias: low complexity; it reads MNTSTSAFDFGSSTASSAATSTTSS. Disordered regions lie at residues 1 to 58 and 168 to 191; these read MNTS…STEA and KKEKQRVDDHTEHTPLLPANPPKG. A DNA-binding region (homeobox) is located at residues 112–171; the sequence is SKKGRQTYQRYQTSVLEAKFQQSSYVSKKQREELRLQTQLTDRQIKIWFQNRRMKAKKEK.

It belongs to the Abd-B homeobox family. Interacts with the TCF transcription factor pop-1.

It localises to the nucleus. In terms of biological role, involved in control of cell fate and pattern formation along the anterior-posterior axis, acting mainly in the tail. Required during embryonic and postembryonic development. Essential for the determination of specific neurons, including the PLM touch neurons. Plays a role in neural fate specification in the hermaphrodite-specific neuron (HSN)/PHB neuron lineage, acting in concert with T-box protein tbx-2 and the asymmetric cell division protein ham-1. Required for male gonadal fate determination, acting in parallel with a WNT/beta-catenin pathway, perhaps by recruiting pop-1 to male-specific gonadal target genes. Involved in development of the hermaphrodite hindgut, and for the response to rectal infection by the coryneform bacterium M.nematophilum. This Caenorhabditis elegans protein is Homeobox protein egl-5.